The primary structure comprises 229 residues: MKSIRQLLSLAKKEKKREKKSNHGSHSMEWESPPSYNEIKSPSAPIFGYDYEDMEYLPTLGVQTLKLQYKCVLQVRSESPFTSYLDAVDNVANWEKQYNGFSGKKPFYRAVMVRAVQAMKANPMSLQDGRSPEYTSEIEGRCLVFHSLGHIPPMMYMCEQFTRDWSGRRNQGIVNVKIWVGVTDTLDNLDQIFDPKKHFSEEEMLSAATILGLEVKKSSDNNYIISKSY.

The dynamin binding motif lies at 2–4 (KSI). The segment at 11 to 36 (AKKEKKREKKSNHGSHSMEWESPPSY) is disordered. Positions 13–23 (KEKKREKKSNH) are enriched in basic residues. Positions 33-36 (PPSY) match the PPXY motif motif. A PTAP/PSAP motif motif is present at residues 42–45 (PSAP).

Belongs to the vesiculoviruses matrix protein family. Homomultimer. Interacts with viral nucleocapsid; this interaction contributes to the virion assembly. Interacts with the viral envelope glycoprotein; this interaction contributes to the virion assembly. Interacts with host RAE1-NUP98 complex. Interacts with host NEDD4 and TSG101. Interacts with host dynamin. Interacts with host NDUFAF4; the interaction inhibits viral propagation and is independent of interferon activation. Interacts with host GTF2H5; the interaction may inhibit host transcription. In terms of processing, phosphorylated by host.

Its subcellular location is the virion. The protein localises to the host endomembrane system. The protein resides in the host nucleus membrane. It localises to the host nucleus. It is found in the host cytoplasm. In terms of biological role, forms a double layer around the helical nucleocapsid, the inner matrix layer binding to the N helix and the outer matrix layer binding to the envelope glycoprotein. Plays a major role in assembly and budding of virion, by recruiting cellular partners of the ESCRT complexes that play a key role in releasing the budding particle from the host membrane. Condensates the ribonucleocapsid core during virus assembly. Inhibits the host mRNA nuclear export thereby inducing the shut off of cellular transcription and preventing the interferon signaling and the establishment of antiviral state in infected cells. This shutoff presumably inhibits interferon signaling and thus establishment of antiviral state in virus infected cells. Induces cell-rounding, cytoskeleton disorganization and apoptosis in infected cell. Inhibits host transcription, possibly through interaction with host DNA repair factor IIH/TFIIH GTF2H5 subunit. The polypeptide is Matrix protein (M) (Piry virus (PIRYV)).